We begin with the raw amino-acid sequence, 369 residues long: Polycomb group protein FERTILIZATION-INDEPENDENT ENDOSPERM (369 aa).

WD repeat units lie at residues 31–73, 81–123, 126–166, 172–212, 238–275, 287–328, and 335–368; these read EGKK…AISA, DKEE…IHKS, GHGD…CILI, GHRY…TYVE, IHTN…NSPG, VPMC…PVLI, and QSKS…DVIT.

The protein belongs to the WD repeat ESC family. As to quaternary structure, interacts directly with MEA. These two proteins are probably indirectly associated with FIS2. In plants, PcG complexes are probably composed of a member of the EZ family (CLF or MEA), FIE, and a member of the VEFS family (FIS2, VRN2 or EMF2). Component of the plant homeodomain / polycomb repressive complex 2 (PHD-PRC2) large complex during prolonged cold, composed of core PRC2 components (VRN2, EZA1, FIE and MSI1), and three related PHD finger proteins (VIL1, VIL2 and VIN3) that mediates histone H3 trimethylation on 'Lys-27' (H3K27me3). Binds to ALP1. As to expression, expressed in cauline leaves, root and stems. In the male reproductive organ, it is expressed in the developing anther; and is abundant in microspore mother cells, in microsporocytes and in the tapetum, but is absent from vascular bundles, the connective tissue and the filament. It is also absent from pollen grains at subsequent developmental stages. In the developing female reproductive organs, it is highly expressed in all cells of the young ovules primordium before archesporial differentiation. Then, it is highly expressed in the ovule sporophytic tissue and the megaspore mother cell before meiosis, but is absent from placenta or the developing carpel. Then, it decreases.

It is found in the nucleus. Polycomb group (PcG) protein. PcG proteins act by forming multiprotein complexes, which are required to maintain the transcriptionally repressive state of homeotic genes throughout development. PcG proteins are not required to initiate repression, but to maintain it during later stages of development. They probably act via the methylation of histones, rendering chromatin heritably changed in its expressibility. Required to prevent the proliferation of the central cell by repressing unknown target genes before fertilization. Probably also involved in floral repression mechanism established during early plant development. Regulates the anteroposterior organization of the endosperm. Interacts with the promoter and represses the transcription of genes such as PHE1, that are paternally active and maternally silenced. This is Polycomb group protein FERTILIZATION-INDEPENDENT ENDOSPERM (FIE) from Arabidopsis thaliana (Mouse-ear cress).